Consider the following 333-residue polypeptide: MSTLVESPVPSNDSQAAAPAAYDPTQKQKSQAKTARIPIKVVAAEKLKKPEWIRVRAAAPGSRFYDIKRILREHNLHTVCEEASCPNIGECFGKGTATFMIMGDKCTRRCPFCDVGHGRPDPLDTQEPENLARTIAALKLSYVVITSVDRDDLRDGGAAHFVECIAKVREYSPDTRIEVLVPDFRGRLDRALHILNSGPPDVMNHNLETVPRLYKQARPGSDYAHSLKLLAEFKKLHPEVPTKSGLMLGLGETDEEILQVMRDMREHNVDMLTIGQYLQPSEHHLPVLRYVHPDTFAMFEREAYAMGFTHAAVGAMVRSSYHADQQAHAAGVN.

A compositionally biased stretch (polar residues) spans 1 to 15 (MSTLVESPVPSNDSQ). The tract at residues 1–34 (MSTLVESPVPSNDSQAAAPAAYDPTQKQKSQAKT) is disordered. Residues C80, C85, C91, C106, C110, C113, and S320 each coordinate [4Fe-4S] cluster. A Radical SAM core domain is found at 91 to 309 (CFGKGTATFM…EREAYAMGFT (219 aa)).

Belongs to the radical SAM superfamily. Lipoyl synthase family. It depends on [4Fe-4S] cluster as a cofactor.

The protein resides in the cytoplasm. It catalyses the reaction [[Fe-S] cluster scaffold protein carrying a second [4Fe-4S](2+) cluster] + N(6)-octanoyl-L-lysyl-[protein] + 2 oxidized [2Fe-2S]-[ferredoxin] + 2 S-adenosyl-L-methionine + 4 H(+) = [[Fe-S] cluster scaffold protein] + N(6)-[(R)-dihydrolipoyl]-L-lysyl-[protein] + 4 Fe(3+) + 2 hydrogen sulfide + 2 5'-deoxyadenosine + 2 L-methionine + 2 reduced [2Fe-2S]-[ferredoxin]. The protein operates within protein modification; protein lipoylation via endogenous pathway; protein N(6)-(lipoyl)lysine from octanoyl-[acyl-carrier-protein]: step 2/2. Functionally, catalyzes the radical-mediated insertion of two sulfur atoms into the C-6 and C-8 positions of the octanoyl moiety bound to the lipoyl domains of lipoate-dependent enzymes, thereby converting the octanoylated domains into lipoylated derivatives. This chain is Lipoyl synthase, found in Bordetella bronchiseptica (strain ATCC BAA-588 / NCTC 13252 / RB50) (Alcaligenes bronchisepticus).